We begin with the raw amino-acid sequence, 243 residues long: Terpene cyclase atmB (243 aa).

Transmembrane regions (helical) follow at residues 19–39, 48–68, 78–98, 112–132, 134–154, 169–189, and 205–225; these read IADV…VGMV, YGMA…YGLI, GVFL…IKFG, LPLI…ALAA, IGPA…LSVG, SYTL…SAWL, and LILW…VCFY.

Belongs to the paxB family.

It localises to the membrane. In terms of biological role, terpene cyclase; part of the ATM2 gene cluster that mediates the biosynthesis of aflatrem, a tremorgenic mycotoxin with acute neurotoxic effects. Synthesis of geranylgeranyl diphosphate (GGPP) by AtmG (a GGPP synthase) precedes condensation of GGPP with indole 3-glycerol phosphate, followed by epoxidation and cyclization by AtmM (a FAD-dependent monooxygenase) and AtmC (a prenyltransferase) to produce paspaline. AtmB is also essential for paspaline production, but its exact role has not been identified yet. AtmP, a cytochrome P450 monooxygenase, subsequently converts paspaline to 13-desoxypaxilline via PC-M6 by removal of the C-30 methyl group and oxidation at C-10. AtmQ, a cytochrome P450 monooxygenase, then catalyzes the oxidation of 13-desoxypaxilline, first at C-7 to produce paspalicine and then at C-13 to form paspalinine. Finally, AtmD prenylates paspalinine to form aflatrem. The polypeptide is Terpene cyclase atmB (Aspergillus flavus).